The primary structure comprises 296 residues: MRTLKELERELQPRQHLWYFEYYTGNNVGLFMKMNRVIYSGQSDIQRIDIFENPDLGVVFALDGITMTTEKDEFMYHEMLAHVPMFLHPNPKKVLIIGGGDGGTLREVLKHDSVEKAILCEVDGLVIEAARKYLKQTSCGFDDPRAEIVIANGAEYVRKFKNEFDVIIIDSTDPTAGQGGHLFTEEFYQACYDALKEDGVFSAETEDPFYDIGWFKLAYRRISKVFPITRVYLGFMTTYPSGMWSYTFASKGIDPIKDFDPEKVRKFNKELKYYNEEVHVASFALPNFVKKELGLM.

Residues 16 to 251 enclose the PABS domain; sequence HLWYFEYYTG…GMWSYTFASK (236 aa). An S-methyl-5'-thioadenosine-binding site is contributed by Q46. Residues H77 and D101 each contribute to the spermidine site. S-methyl-5'-thioadenosine is bound by residues E121 and 152-153; that span reads NG. The Proton acceptor role is filled by D170. Spermidine is bound at residue 170-173; it reads DSTD.

It belongs to the spermidine/spermine synthase family. Homotetramer.

The protein resides in the cytoplasm. The catalysed reaction is S-adenosyl 3-(methylsulfanyl)propylamine + putrescine = S-methyl-5'-thioadenosine + spermidine + H(+). Its pathway is amine and polyamine biosynthesis; spermidine biosynthesis; spermidine from putrescine: step 1/1. With respect to regulation, strongly inhibited by S-adenosyl-1,8-diamino-3-thiooctane. Catalyzes the irreversible transfer of a propylamine group from the amino donor S-adenosylmethioninamine (decarboxy-AdoMet) to putrescine (1,4-diaminobutane) to yield spermidine. It has lower affinity and lower activity towards 1,3-diaminopropane, cadaverine (1,5-diaminopentane), agmatine, norspermidine and spermidine (in vitro). The polypeptide is Polyamine aminopropyltransferase (Thermotoga maritima (strain ATCC 43589 / DSM 3109 / JCM 10099 / NBRC 100826 / MSB8)).